The chain runs to 205 residues: Ribosome maturation factor RimP (205 aa).

The segment covering 1 to 13 has biased composition (polar residues); sequence MSNAEATTSSDRT. Residues 1–27 form a disordered region; that stretch reads MSNAEATTSSDRTGTGKAEAESVHNPE. Basic and acidic residues predominate over residues 18 to 27; it reads AEAESVHNPE.

It belongs to the RimP family.

It is found in the cytoplasm. Required for maturation of 30S ribosomal subunits. This Arthrobacter sp. (strain FB24) protein is Ribosome maturation factor RimP.